We begin with the raw amino-acid sequence, 584 residues long: Negative regulator of RAS-cAMP pathway (584 aa).

Residue Thr25 is modified to Phosphothreonine. Disordered stretches follow at residues Pro95 to Ser167, Pro209 to Ser279, Ser291 to Asn320, Asn343 to Val366, and Ser381 to Thr432. Composition is skewed to polar residues over residues Pro114–Met127, Cys229–Gln254, and Asn267–Thr278. Phosphoserine occurs at positions 247 and 276. Positions Phe307–Asn320 are enriched in acidic residues. A compositionally biased stretch (polar residues) spans Asn343–His363. Low complexity predominate over residues Ser381–Glu392. Positions Val398 to Thr432 are enriched in polar residues. Residue Ser442 is modified to Phosphoserine. Ser518 carries the post-translational modification Phosphoserine; by PKA. Positions Asp551 to Ile584 are disordered. A compositionally biased stretch (low complexity) spans Asn557–Asn568.

Its subcellular location is the nucleus. Functionally, negative regulator of Ras-cAMP pathway. Involved in transcriptional regulation of galactose-inducible genes. In Saccharomyces cerevisiae (strain ATCC 204508 / S288c) (Baker's yeast), this protein is Negative regulator of RAS-cAMP pathway (MKS1).